Here is a 273-residue protein sequence, read N- to C-terminus: NAD(P)H-hydrate epimerase (273 aa).

The region spanning Ala52–Leu260 is the YjeF N-terminal domain. Asn105–Asp109 is a binding site for (6S)-NADPHX. 2 residues coordinate K(+): Asn106 and Asp170. (6S)-NADPHX is bound by residues Gly174–Glu180 and Asp203. Residue Ser206 participates in K(+) binding.

Belongs to the NnrE/AIBP family. K(+) is required as a cofactor.

It catalyses the reaction (6R)-NADHX = (6S)-NADHX. The catalysed reaction is (6R)-NADPHX = (6S)-NADPHX. Functionally, catalyzes the epimerization of the S- and R-forms of NAD(P)HX, a damaged form of NAD(P)H that is a result of enzymatic or heat-dependent hydration. This is a prerequisite for the S-specific NAD(P)H-hydrate dehydratase to allow the repair of both epimers of NAD(P)HX. The protein is NAD(P)H-hydrate epimerase of Branchiostoma floridae (Florida lancelet).